We begin with the raw amino-acid sequence, 226 residues long: MKMVAPWTRFYSNSCCLCCHVRTGTILLGVWYLIINAVVLLILLSALADPDQYHFSSSELGGDFEFMDDANMCIAIAISLLMILICAMATYGAYKQRAAWIIPFFCYQIFDFALNTLVAITVLVYPNSIQEYIRQLPPNFPYRDDVMSVNPTCLVLIILLFISIILTFKGYLISCVWNCYRYINGRNSSDVLVYVTSNDTTVLLPPYDDATVNGAAKEPPPPYVSA.

Transmembrane regions (helical) follow at residues 26–46, 72–92, 100–120, and 153–173; these read ILLGVWYLIINAVVLLILLSA, MCIAIAISLLMILICAMATYG, WIIPFFCYQIFDFALNTLVAI, and CLVLIILLFISIILTFKGYLI. Residues 205–221 form a required for NEDD4 interaction region; it reads PPYDDATVNGAAKEPPP.

This sequence belongs to the LAPTM4/LAPTM5 transporter family. As to quaternary structure, homooligomer; upon reaching the lysosomes. Interacts with MCOLN1. Interacts with NEDD4; may play a role in the lysosomal sorting of LAPTM4B; enhances HGS association with NEDD4; mediates inhibition of EGFR degradation. Interacts with PIP5K1C; promotes SNX5 association with LAPTM4B; kinase activity of PIP5K1C is required; interaction is regulated by phosphatidylinositol 4,5-bisphosphate generated by PIP5K1C. Interacts with HGS; promotes HGS ubiquitination. Interacts with SNX5. Interacts with SLC3A2 and SLC7A5; recruits SLC3A2 and SLC7A5 to lysosomes to promote leucine uptake into these organelles and is required for mTORC1 activation. Interacts with LRRC32; decreases TGFB1 production in regulatory T cells. Interacts with BECN1; competes with EGFR for LAPTM4B binding; regulates EGFR activity. Interacts with EGFR; positively correlates with EGFR activation. Post-translationally, undergoes proteolytic cleavage following delivery to the lysosomes. Ubiquitinated by NEDD4.

The protein localises to the endomembrane system. It localises to the late endosome membrane. Its subcellular location is the cell membrane. It is found in the cell projection. The protein resides in the lysosome membrane. The protein localises to the endosome membrane. It localises to the endosome. Its subcellular location is the multivesicular body membrane. It is found in the multivesicular body lumen. Functionally, required for optimal lysosomal function. Blocks EGF-stimulated EGFR intraluminal sorting and degradation. Conversely by binding with the phosphatidylinositol 4,5-bisphosphate, regulates its PIP5K1C interaction, inhibits HGS ubiquitination and relieves LAPTM4B inhibition of EGFR degradation. Recruits SLC3A2 and SLC7A5 (the Leu transporter) to the lysosome, promoting entry of leucine and other essential amino acid (EAA) into the lysosome, stimulating activation of proton-transporting vacuolar (V)-ATPase protein pump (V-ATPase) and hence mTORC1 activation. Plays a role as negative regulator of TGFB1 production in regulatory T cells. Binds ceramide and facilitates its exit from late endosome in order to control cell death pathways. The sequence is that of Lysosomal-associated transmembrane protein 4B from Macaca fascicularis (Crab-eating macaque).